Here is a 720-residue protein sequence, read N- to C-terminus: Mitogen-activated protein kinase 6 (720 aa).

Met-1 participates in a covalent cross-link: Peptide (Met-Gly) (interchain with G-Cter in ubiquitin). Residues 20–316 form the Protein kinase domain; it reads YMDLKPLGCG…AEEALSHPYM (297 aa). Residues 26–34 and Lys-49 each bind ATP; that span reads LGCGGNGLV. Asp-152 serves as the catalytic Proton acceptor. Ser-189 carries the phosphoserine; by PAK1, PAK2 and PAK3 modification. The SEG motif signature appears at 189–191; it reads SEG. The short motif at 332 to 337 is the FRIEDE motif element; the sequence is FHIEDE. Ser-386, Ser-554, and Ser-556 each carry phosphoserine. Residues 638–657 form a disordered region; sequence SEMLETEPVEEGKRGERGRE. Residues 647-657 are compositionally biased toward basic and acidic residues; the sequence is EEGKRGERGRE. Position 683 is a phosphoserine (Ser-683). The segment covering 700-714 has biased composition (polar residues); sequence AMKSSPQIPHKTYSS. Positions 700–720 are disordered; sequence AMKSSPQIPHKTYSSILKHLN.

It belongs to the protein kinase superfamily. CMGC Ser/Thr protein kinase family. MAP kinase subfamily. In terms of assembly, heterodimer with ERK4/MAPK4. Interacts with (via FRIEDE motif) MAPKAPK5. Interacts with UBE3A; this interaction may be indirect and mediated by HERC2, possibly via HERC2 interaction with NEURL4. Mg(2+) is required as a cofactor. Phosphorylated at Ser-189 by PAK1, PAK2 and PAK3 resulting in catalytic activation. Phosphorylated by MAPKAPK5 at other sites. In terms of processing, ubiquitination at Met-1 leads to degradation by the proteasome pathway.

It is found in the cytoplasm. It localises to the nucleus. It catalyses the reaction L-seryl-[protein] + ATP = O-phospho-L-seryl-[protein] + ADP + H(+). The enzyme catalyses L-threonyl-[protein] + ATP = O-phospho-L-threonyl-[protein] + ADP + H(+). Its activity is regulated as follows. Activated by phosphorylation at Ser-189. Atypical MAPK protein. Phosphorylates microtubule-associated protein 2 (MAP2) and MAPKAPK5. The precise role of the complex formed with MAPKAPK5 is still unclear, but the complex follows a complex set of phosphorylation events: upon interaction with atypical MAPKAPK5, ERK3/MAPK6 is phosphorylated at Ser-189 and then mediates phosphorylation and activation of MAPKAPK5, which in turn phosphorylates ERK3/MAPK6. May promote entry in the cell cycle. The sequence is that of Mitogen-activated protein kinase 6 (Mapk6) from Mus musculus (Mouse).